A 301-amino-acid chain; its full sequence is uncharacterized protein (301 aa).

3 residues coordinate a divalent metal cation: glutamate 146, glutamate 148, and aspartate 177.

This sequence belongs to the FAH family.

This is an uncharacterized protein from Staphylococcus saprophyticus subsp. saprophyticus (strain ATCC 15305 / DSM 20229 / NCIMB 8711 / NCTC 7292 / S-41).